The primary structure comprises 259 residues: UPF0246 protein NMCC_0856 (259 aa).

It belongs to the UPF0246 family.

The polypeptide is UPF0246 protein NMCC_0856 (Neisseria meningitidis serogroup C (strain 053442)).